The following is a 415-amino-acid chain: Serine/threonine transporter SstT (415 aa).

9 helical membrane passes run 21 to 41 (ILLG…AALA), 45 to 65 (LGTL…LMLV), 83 to 103 (ILFL…VLSV), 142 to 162 (ALLN…GLAF), 193 to 213 (LGIF…ALWG), 217 to 237 (LLMV…PLIV), 299 to 319 (MAGA…TLGI), 331 to 351 (VVAS…LLLI), and 358 to 378 (FGIS…IGVL).

Belongs to the dicarboxylate/amino acid:cation symporter (DAACS) (TC 2.A.23) family.

The protein resides in the cell inner membrane. The catalysed reaction is L-serine(in) + Na(+)(in) = L-serine(out) + Na(+)(out). It carries out the reaction L-threonine(in) + Na(+)(in) = L-threonine(out) + Na(+)(out). In terms of biological role, involved in the import of serine and threonine into the cell, with the concomitant import of sodium (symport system). The chain is Serine/threonine transporter SstT from Pectobacterium carotovorum subsp. carotovorum (strain PC1).